A 146-amino-acid polypeptide reads, in one-letter code: MVNSCCGSVCSDQGCDQGLCQETCCRPSCCQTTCCCPSCVVSSCCRPSCSQTTCCQTTCCRPSCCHPVCCQTTCRPSCGVSSCCRPLCCQTTCHPSCGMSSCCRPLCCQTTCRPSCGVSSCCRPLCCQTTCCRATCCRPSCCGSSC.

18 tandem repeats follow at residues 5 to 9 (CCGSV), 24 to 28 (CCRPS), 29 to 33 (CCQTT), 34 to 38 (CCCPS), 44 to 48 (CCRPS), 54 to 58 (CCQTT), 59 to 63 (CCRPS), 64 to 68 (CCHPV), 69 to 73 (CCQTT), 83 to 87 (CCRPL), 88 to 92 (CCQTT), 102 to 106 (CCRPL), 107 to 111 (CCQTT), 121 to 125 (CCRPL), 126 to 130 (CCQTT), 131 to 135 (CCRAT), 136 to 140 (CCRPS), and 141 to 145 (CCGSS). The 18 X 5 AA repeats of C-C-[GRQC]-[SPT]-[VSTL] stretch occupies residues 5-145 (CCGSVCSDQG…CCRPSCCGSS (141 aa)).

The protein belongs to the KRTAP type 4 family. As to quaternary structure, interacts with hair keratins. Expressed in the hair follicles.

Functionally, in the hair cortex, hair keratin intermediate filaments are embedded in an interfilamentous matrix, consisting of hair keratin-associated proteins (KRTAP), which are essential for the formation of a rigid and resistant hair shaft through their extensive disulfide bond cross-linking with abundant cysteine residues of hair keratins. The matrix proteins include the high-sulfur and high-glycine-tyrosine keratins. In Homo sapiens (Human), this protein is Keratin-associated protein 4-1 (KRTAP4-1).